The sequence spans 242 residues: MATVSMRDMLKAGVHFGHQTRYWNPKMKPFIFGARNRVHIINLEKTVPMFNEALAELAKVGEKKGKVLFVGTKRAASEAVKEAAIASNQYYVNNRWLGGMLTNYKTVRQSIKRLKDFEAQAQDGTFEKLTKKEALMRTREMEKLEKSLGGIKDMGGLPDALFVIDADHEHIAIKEANNLGIPVYAVVDTNSNPDGVDYIIPGNDDAIRAVQLYLNAAASAVTEGRNKDVAVVAEKDGFVEAE.

It belongs to the universal ribosomal protein uS2 family.

The protein is Small ribosomal subunit protein uS2 of Vibrio campbellii (strain ATCC BAA-1116).